The following is a 159-amino-acid chain: Putative pre-16S rRNA nuclease (159 aa).

This sequence belongs to the YqgF nuclease family.

It localises to the cytoplasm. Functionally, could be a nuclease involved in processing of the 5'-end of pre-16S rRNA. This is Putative pre-16S rRNA nuclease from Bartonella quintana (strain Toulouse) (Rochalimaea quintana).